A 357-amino-acid polypeptide reads, in one-letter code: Anthranilate phosphoribosyltransferase (357 aa).

Residues glycine 91, glycine 94–aspartate 95, threonine 99, asparagine 101–threonine 104, lysine 119–serine 127, and serine 131 each bind 5-phospho-alpha-D-ribose 1-diphosphate. Glycine 91 serves as a coordination point for anthranilate. A Mg(2+)-binding site is contributed by serine 103. Asparagine 122 provides a ligand contact to anthranilate. Residue arginine 177 participates in anthranilate binding. Mg(2+) contacts are provided by aspartate 235 and glutamate 236.

It belongs to the anthranilate phosphoribosyltransferase family. In terms of assembly, homodimer. Mg(2+) serves as cofactor.

The catalysed reaction is N-(5-phospho-beta-D-ribosyl)anthranilate + diphosphate = 5-phospho-alpha-D-ribose 1-diphosphate + anthranilate. It functions in the pathway amino-acid biosynthesis; L-tryptophan biosynthesis; L-tryptophan from chorismate: step 2/5. Its function is as follows. Catalyzes the transfer of the phosphoribosyl group of 5-phosphorylribose-1-pyrophosphate (PRPP) to anthranilate to yield N-(5'-phosphoribosyl)-anthranilate (PRA). This chain is Anthranilate phosphoribosyltransferase, found in Shewanella baltica (strain OS195).